Here is a 257-residue protein sequence, read N- to C-terminus: Undecaprenyl-diphosphatase (257 aa).

The next 8 helical transmembrane spans lie at 4–24 (LIRVVILAIVQGIAEFLPISS), 41–61 (SVTLEIILHAGTLGSILVVFW), 74–94 (VIGLLVIGTLPAVVIGLTIKT), 103–123 (PLLAGAMLIVTGVMLIVLGRL), 133–153 (LGLGAAFLVGCFQAFAILPGI), 173–193 (SVTFSFLLAIPAILGATVLAI), 209–229 (VLSIGAAVAFAVGIVALKWLI), and 236–256 (RLHWFAYWCIPAGLLVVLLNL).

This sequence belongs to the UppP family.

Its subcellular location is the cell inner membrane. It catalyses the reaction di-trans,octa-cis-undecaprenyl diphosphate + H2O = di-trans,octa-cis-undecaprenyl phosphate + phosphate + H(+). Its function is as follows. Catalyzes the dephosphorylation of undecaprenyl diphosphate (UPP). Confers resistance to bacitracin. This Rhodopirellula baltica (strain DSM 10527 / NCIMB 13988 / SH1) protein is Undecaprenyl-diphosphatase.